The following is a 204-amino-acid chain: Superoxide dismutase [Mn] (204 aa).

Residue histidine 27 participates in Mn(2+) binding. Residues threonine 34 and threonine 70 each carry the phosphothreonine modification. Mn(2+)-binding residues include histidine 82, aspartate 164, and histidine 168.

This sequence belongs to the iron/manganese superoxide dismutase family. As to quaternary structure, homodimer. Requires Mn(2+) as cofactor.

It catalyses the reaction 2 superoxide + 2 H(+) = H2O2 + O2. Functionally, destroys superoxide anion radicals which are normally produced within the cells and which are toxic to biological systems. The polypeptide is Superoxide dismutase [Mn] (sodA) (Bacillus caldotenax).